Consider the following 345-residue polypeptide: Ninja-family protein AFP1 (345 aa).

Disordered regions lie at residues T114 to N185 and Q201 to S256. Basic and acidic residues-rich tracts occupy residues E123–T132 and L222–R232. Low complexity predominate over residues P235–T249.

The protein belongs to the Ninja family. As to quaternary structure, forms a heterodimer with AFP2. Interacts with ABI5/DPBF1, DPBF2, AREB3/DPBF3, ABF1, ABF3/DPBF5 and ABF4/AREB2.

It localises to the nucleus. In terms of biological role, acts as a negative regulator of abscisic acid (ABA) response during germination through the ubiquitin-mediated proteolysis of ABI5/DPBF1. The sequence is that of Ninja-family protein AFP1 (AFP1) from Arabidopsis thaliana (Mouse-ear cress).